A 550-amino-acid polypeptide reads, in one-letter code: Arginine--tRNA ligase (550 aa).

The short motif at 130–140 (ANPTGPIHLGG) is the 'HIGH' region element.

This sequence belongs to the class-I aminoacyl-tRNA synthetase family. As to quaternary structure, monomer.

The protein resides in the cytoplasm. It catalyses the reaction tRNA(Arg) + L-arginine + ATP = L-arginyl-tRNA(Arg) + AMP + diphosphate. This chain is Arginine--tRNA ligase, found in Rhodococcus erythropolis (strain PR4 / NBRC 100887).